The chain runs to 394 residues: Protein NDRG1 (394 aa).

An N-acetylserine modification is found at Ser2. Phosphoserine is present on residues Ser2, Ser319, and Ser326. Residues 325–394 (RSRTASGSSV…AGPKSMEVSC (70 aa)) form a disordered region. Positions 327-339 (RTASGSSVTSLDG) are enriched in polar residues. Thr328 bears the Phosphothreonine; by SGK1 mark. Ser330 and Ser332 each carry phosphoserine; by SGK1. Ser333 carries the post-translational modification Phosphoserine. At Thr335 the chain carries Phosphothreonine. Position 336 is a phosphoserine (Ser336). 3 tandem repeats follow at residues 339–348 (GTRSRSHTSE), 349–358 (GTRSRSHTSE), and 359–368 (GTRSRSHTSE). The interval 339–368 (GTRSRSHTSEGTRSRSHTSEGTRSRSHTSE) is 3 X 10 AA tandem repeats of G-T-R-S-R-S-H-T-S-E. Thr340 is modified (phosphothreonine). Ser342 bears the Phosphoserine mark. Positions 345-371 (HTSEGTRSRSHTSEGTRSRSHTSEGAH) are enriched in basic and acidic residues. At Thr346 the chain carries Phosphothreonine; by SGK1. Ser352 bears the Phosphoserine mark. Position 356 is a phosphothreonine; by SGK1 (Thr356). Ser362 bears the Phosphoserine mark. Residue Ser364 is modified to Phosphoserine; by SGK1. Thr366 carries the phosphothreonine; by SGK1 modification. Thr375 is modified (phosphothreonine).

It belongs to the NDRG family. In terms of assembly, interacts with RAB4A (membrane-bound form); the interaction involves NDRG1 in vesicular recycling of CDH1. In terms of processing, under stress conditions, phosphorylated in the C-terminal on many serine and threonine residues. Phosphorylated in vitro by PKA. Phosphorylation enhanced by increased intracellular cAMP levels. Homocysteine induces dephosphorylation. Phosphorylation by SGK1 is cell cycle dependent. In terms of tissue distribution, ubiquitous; expressed most prominently in placental membranes and prostate, kidney, small intestine, and ovary tissues. Also expressed in heart, brain, skeletal muscle, lung, liver and pancreas. Low levels in peripheral blood leukocytes and in tissues of the immune system. Expressed mainly in epithelial cells. Also found in Schwann cells of peripheral neurons. Reduced expression in adenocarcinomas compared to normal tissues. In colon, prostate and placental membranes, the cells that border the lumen show the highest expression.

It is found in the cytoplasm. Its subcellular location is the cytosol. The protein localises to the cytoskeleton. It localises to the microtubule organizing center. The protein resides in the centrosome. It is found in the nucleus. Its subcellular location is the cell membrane. In terms of biological role, stress-responsive protein involved in hormone responses, cell growth, and differentiation. Acts as a tumor suppressor in many cell types. Necessary but not sufficient for p53/TP53-mediated caspase activation and apoptosis. Has a role in cell trafficking, notably of the Schwann cell, and is necessary for the maintenance and development of the peripheral nerve myelin sheath. Required for vesicular recycling of CDH1 and TF. May also function in lipid trafficking. Protects cells from spindle disruption damage. Functions in p53/TP53-dependent mitotic spindle checkpoint. Regulates microtubule dynamics and maintains euploidy. This is Protein NDRG1 (NDRG1) from Homo sapiens (Human).